Consider the following 410-residue polypeptide: MWTSWWLWPLVAVCTADSFLDQAVQILRVTPVIDGHNDLPWQLLNKFNNRLQDSRANLTVLADTHTNIPKLRAGFVGGQFWSAYTPCDTQNKDTVRRTLEQMDVVHRMCQLYPETFLCVTDSAGIQQAFREGKVASLIGVEGGHSIDSSLGVLRALYRLGMRYLTLTHNCNTPWADNWLVDRGDDEAQSGGLSVFGQRVVREMNRLGVMIDLAHVSVATMKAALQLSTAPVIFSHSSAFTVCAHKRNVPDDVLQLVKETGSLVMVNFYNDYVSCASEATLSQVADHLDYIKNVAGAAAVRFGGDFDGVTRLPVGLEDVSKYPDLVAELLRRGWTEAEVRGALAENLLRVFREVEQVSNQAQVPEEEPISLEQLGGSCRTQYGYSEAPSLHRRPGALLASLSLLLLSLGLL.

The N-terminal stretch at 1-16 (MWTSWWLWPLVAVCTA) is a signal peptide. The Zn(2+) site is built by His-36 and Asp-38. N-linked (GlcNAc...) asparagine glycosylation occurs at Asn-57. An intrachain disulfide couples Cys-87 to Cys-170. Glu-141 contacts Zn(2+). His-168 contacts substrate. 2 residues coordinate Zn(2+): His-214 and His-235. The cysteines at positions 242 and 274 are disulfide-linked. Residues Arg-246 and Asp-304 each contribute to the substrate site. The GPI-anchor amidated serine moiety is linked to residue Ser-384. Residues 385–410 (EAPSLHRRPGALLASLSLLLLSLGLL) constitute a propeptide, removed in mature form.

Belongs to the metallo-dependent hydrolases superfamily. Peptidase M19 family. Homodimer; disulfide-linked. Requires Zn(2+) as cofactor.

It localises to the apical cell membrane. Its subcellular location is the cell projection. It is found in the microvillus membrane. It carries out the reaction an L-aminoacyl-L-amino acid + H2O = 2 an L-alpha-amino acid. The enzyme catalyses leukotriene D4 + H2O = leukotriene E4 + glycine. It catalyses the reaction L-cystine-bis-glycine + 2 H2O = L-cystine + 2 glycine. The catalysed reaction is a beta-lactam + H2O = a substituted beta-amino acid. It carries out the reaction glycyldehydrophenylalanine + H2O = 2,3-didehydrophenylalanine + glycine. Inhibited by L-penicillamine. Beta-lactamase activity is inhibited by cilastatin. Hydrolyzes a wide range of dipeptides including the conversion of leukotriene D4 to leukotriene E4. Hydrolyzes cystinyl-bis-glycine (cys-bis-gly) formed during glutathione degradation. Also possesses beta lactamase activity and hydrolytically inactivates beta-lactam antibiotics. Functionally, independently of its dipeptidase activity, acts as an adhesion receptor for neutrophil recruitment from bloodstream into inflamed lungs and liver. The protein is Dipeptidase 1 (DPEP1) of Oryctolagus cuniculus (Rabbit).